The sequence spans 391 residues: MSSKRDYYEILEVSRSATQQDIKKAFRKLAMKYHPDRNKDSDAEEKFKEVNEAYEVLSDEEKRKLYDTYGHEGLNASGFHQGGFNPYDVFNSVFSGFDFEGGFGDVFSQFFGGGGSGFHNQEYIEEVDVNLVHEIKINFLEAANGCIKNVKYTRQVTCPDCNGSGSADGDVITCSDCNGEGFLVEQRRTLLGMFQTKKTCPSCKGEGQTIKNKCKKCKSRRMVDEVVERKVSIDSNVFYQDVVIVRGEGHIYKNLVGDLFLRVKIEPSRVFELRDNHVVVNVLVDPLVAITGGTILIPTLKEIKEINLKAGTKNGDIITIANGGINLKLDSRVYGANYNQKGDLIVVINYARPSEYSKQEITKLKEFIKPNKEVNLYETLMKKELNNKDSQ.

Residues 6-70 (DYYEILEVSR…EKRKLYDTYG (65 aa)) form the J domain. Residues 145 to 226 (GCIKNVKYTR…CKSRRMVDEV (82 aa)) form a CR-type zinc finger. Positions 158, 161, 174, 177, 200, 203, 214, and 217 each coordinate Zn(2+). CXXCXGXG motif repeat units lie at residues 158-165 (CPDCNGSG), 174-181 (CSDCNGEG), 200-207 (CPSCKGEG), and 214-221 (CKKCKSRR).

It belongs to the DnaJ family. In terms of assembly, homodimer. It depends on Zn(2+) as a cofactor.

The protein localises to the cytoplasm. Its function is as follows. Participates actively in the response to hyperosmotic and heat shock by preventing the aggregation of stress-denatured proteins and by disaggregating proteins, also in an autonomous, DnaK-independent fashion. Unfolded proteins bind initially to DnaJ; upon interaction with the DnaJ-bound protein, DnaK hydrolyzes its bound ATP, resulting in the formation of a stable complex. GrpE releases ADP from DnaK; ATP binding to DnaK triggers the release of the substrate protein, thus completing the reaction cycle. Several rounds of ATP-dependent interactions between DnaJ, DnaK and GrpE are required for fully efficient folding. Also involved, together with DnaK and GrpE, in the DNA replication of plasmids through activation of initiation proteins. In Mycoplasmoides gallisepticum (strain R(low / passage 15 / clone 2)) (Mycoplasma gallisepticum), this protein is Chaperone protein DnaJ.